We begin with the raw amino-acid sequence, 123 residues long: Highly acidic elicitin 20 (123 aa).

The N-terminal stretch at 1 to 20 is a signal peptide; sequence MQFTALFAATAVALVGSVSA. 3 disulfides stabilise this stretch: cysteine 23–cysteine 91, cysteine 47–cysteine 76, and cysteine 71–cysteine 115.

This sequence belongs to the elicitin family.

It localises to the secreted. Induces local and distal defense responses (incompatible hypersensitive reaction) in plants from the solanaceae and cruciferae families. Elicits leaf necrosis and causes the accumulation of pathogenesis-related proteins. Might interact with the lipidic molecules of the plasma membrane. The protein is Highly acidic elicitin 20 (B20) of Phytophthora cryptogea.